A 199-amino-acid polypeptide reads, in one-letter code: Recombination protein RecR (199 aa).

The C4-type zinc finger occupies 56-71 (CRSCFNVAQSELCRIC). One can recognise a Toprim domain in the interval 79–174 (SSICVVEEPK…KVTRLASGLP (96 aa)).

Belongs to the RecR family.

May play a role in DNA repair. It seems to be involved in an RecBC-independent recombinational process of DNA repair. It may act with RecF and RecO. The polypeptide is Recombination protein RecR (Frankia casuarinae (strain DSM 45818 / CECT 9043 / HFP020203 / CcI3)).